Reading from the N-terminus, the 79-residue chain is U-actitoxin-Avd8b (79 aa).

An N-terminal signal peptide occupies residues 1–19 (MKSLVIVFVVLLGVAMISA). The propeptide occupies 20-36 (NEEELLAILQDQRNDAR).

It belongs to the sea anemone 8 toxin family.

The protein resides in the secreted. The protein localises to the nematocyst. This is U-actitoxin-Avd8b from Anemonia viridis (Snakelocks anemone).